The chain runs to 452 residues: MQRRIMGIETEFGVTCTFHGHRRLSPDEVARYLFRRVVSWGRSSNVFLRNGARLYLDVGSHPEYATAECDNLVQLVTHDRAGEWVLEDLLVDAEQRLADEGIGGDIYLFKNNTDSAGNSYGCHENYLIVRAGEFSRISDVLLPFLVTRQLICGAGKVLQTPKAATFCLSQRAEHIWEGVSSATTRSRPIINTRDEPHADAEKYRRLHVIVGDSNMCETTTMLKVGTAALMLEMVETGVPFRDFSLDNPIRAIREVSHDITGRRPVRLAGGRQASALDIQREYYTRAFEHLQTREPNVQFEQVVDLWGRQLDAIESQDFAKVDTEIDWVIKRKLFQRYQDRDNMELTDPKIAQLDLAYHDIKRGRGVFDLLQRKGLAARVTTDEDIADAVNHPPQTTRARLRGEFISAAQAAGRDFTVDWVHLKLNDQAQRTVLCKDPFRAVDERVKRLIASM.

Glu-9 contributes to the Mg(2+) binding site. Residue Arg-53 participates in ATP binding. Mg(2+) is bound at residue Tyr-55. The active-site Proton acceptor is the Asp-57. Glu-63 provides a ligand contact to Mg(2+). ATP-binding residues include Thr-66 and Trp-419.

This sequence belongs to the Pup ligase/Pup deamidase family. Pup-conjugating enzyme subfamily.

It carries out the reaction ATP + [prokaryotic ubiquitin-like protein]-L-glutamate + [protein]-L-lysine = ADP + phosphate + N(6)-([prokaryotic ubiquitin-like protein]-gamma-L-glutamyl)-[protein]-L-lysine.. The protein operates within protein degradation; proteasomal Pup-dependent pathway. Its pathway is protein modification; protein pupylation. Catalyzes the covalent attachment of the prokaryotic ubiquitin-like protein modifier Pup to the proteasomal substrate proteins, thereby targeting them for proteasomal degradation. This tagging system is termed pupylation. The ligation reaction involves the side-chain carboxylate of the C-terminal glutamate of Pup and the side-chain amino group of a substrate lysine. The protein is Pup--protein ligase of Mycobacterium leprae (strain Br4923).